A 115-amino-acid chain; its full sequence is U3-lycotoxin-Ls1k (115 aa).

The N-terminal stretch at 1–20 (MKFVLLFGVLVVTLFSYSSA) is a signal peptide. Positions 21-44 (EMLDDFDQADEDELLSLIEKEEAR) are excised as a propeptide. 4 cysteine pairs are disulfide-bonded: Cys-48/Cys-63, Cys-55/Cys-72, Cys-62/Cys-87, and Cys-74/Cys-85.

It belongs to the neurotoxin 19 (CSTX) family. 01 subfamily. Expressed by the venom gland.

The protein resides in the secreted. The polypeptide is U3-lycotoxin-Ls1k (Lycosa singoriensis (Wolf spider)).